Consider the following 89-residue polypeptide: uncharacterized protein (89 aa).

This sequence to Synechocystis PCC 6803 slr1025.

This is an uncharacterized protein from Ureaplasma parvum serovar 3 (strain ATCC 700970).